A 144-amino-acid chain; its full sequence is Large ribosomal subunit protein uL15 (144 aa).

The segment at 1–53 is disordered; it reads MRLNTLSPAEGSKHASKRLGRGIGSGLGKTGGRGHKGQKSRSGGGVRRGFEGG. Positions 21-31 are enriched in gly residues; that stretch reads RGIGSGLGKTG.

This sequence belongs to the universal ribosomal protein uL15 family. In terms of assembly, part of the 50S ribosomal subunit.

Binds to the 23S rRNA. In Edwardsiella ictaluri (strain 93-146), this protein is Large ribosomal subunit protein uL15.